Reading from the N-terminus, the 65-residue chain is Large ribosomal subunit protein bL35 (65 aa).

The protein belongs to the bacterial ribosomal protein bL35 family.

The sequence is that of Large ribosomal subunit protein bL35 from Thermotoga neapolitana (strain ATCC 49049 / DSM 4359 / NBRC 107923 / NS-E).